Consider the following 893-residue polypeptide: DNA mismatch repair protein MutS (893 aa).

638-645 is a binding site for ATP; the sequence is GPNMAGKS.

The protein belongs to the DNA mismatch repair MutS family.

Its function is as follows. This protein is involved in the repair of mismatches in DNA. It is possible that it carries out the mismatch recognition step. This protein has a weak ATPase activity. This chain is DNA mismatch repair protein MutS, found in Lawsonia intracellularis (strain PHE/MN1-00).